A 30-amino-acid polypeptide reads, in one-letter code: Varv peptide H (30 aa).

The segment at residues 1 to 30 is a cross-link (cyclopeptide (Gly-Asn)); it reads GLPVCGETCFGGTCNTPGCSCETWPVCSRN. 3 disulfides stabilise this stretch: cysteine 5–cysteine 19, cysteine 9–cysteine 21, and cysteine 14–cysteine 27.

Post-translationally, this is a cyclic peptide.

In terms of biological role, probably participates in a plant defense mechanism. This is Varv peptide H from Viola arvensis (European field pansy).